The primary structure comprises 379 residues: MTSYNPASPDFPFTLGIEEEYQVVDPQTRELRSYITQILDRGRMILREQIKPELHQSMVEVGTQPCRTIQEARAEVVRLRGTIAGLARQHGLTIISAGTHPISSWMSQEITPFERYKGVVEEMQQLALQLLIFGMHVHVGMPDDEVAIELMNVARYFLPHILALSTSSPFWMGRNTGFKSYRSALFSNFPRTGIPPSFHSAAEFQNYVKLLIKTNCIDDAKKIYWDLRPHPYFGTLEFRVCDAATRVDECIALAALMQALVVKLHLMFSENTTFRVYRRAVIMENKWRAQRWGLDGKLIDFGKRAEVEAKALMHELVAFVDEVVDELGSRHEVEYLLNVADGGSSADRQLAVFRETNDLHAVVDNLIVETLEGVPVYQG.

The protein belongs to the glutamate--cysteine ligase type 2 family. YbdK subfamily.

It carries out the reaction L-cysteine + L-glutamate + ATP = gamma-L-glutamyl-L-cysteine + ADP + phosphate + H(+). In terms of biological role, ATP-dependent carboxylate-amine ligase which exhibits weak glutamate--cysteine ligase activity. The protein is Putative glutamate--cysteine ligase 2 of Roseiflexus castenholzii (strain DSM 13941 / HLO8).